The primary structure comprises 367 residues: MVKETHRFETFTEEPIRLIGEEGEWLGDFPLDLEGEKLRRLYRDMLAARMLDERYTILIRTGKTSFIAPAAGHEAAQVAIAHAIRPGFDWVFPYYRDHGLALALGIPLKELLGQMLATKADPNKGRQMPEHPGSKALNFFTVASPIASHVPPAAGAAISMKLLRTGQVAVCTFGDGATSEGDWYAGINFAAVQGAPAVFIAENNFYAISVDYRHQTHSPTIADKAHAFGIPGYLVDGMDVLASYYVVKEAVERARRGEGPSLVELRVYRYGPHSSADDDSRYRPKEEVAFWRKKDPIPRFRRFLEARGLWNEEWEEDVREEIRAELERGLKEAEEAGPVPPEWMFEDVFAEKPWHLLRQEALLKEEL.

Substrate is bound by residues F66, Y95, 128–131, and S144; that span reads MPEH. 94-96 contacts thiamine diphosphate; it reads YYR. Thiamine diphosphate contacts are provided by residues 144 to 146, 174 to 180, 204 to 208, and H273; these read SPI, GDGATSE, and NFYAI. Mg(2+)-binding residues include D175, N204, and Y206.

It belongs to the BCKDHA family. As to quaternary structure, heterotetramer of two alpha and two beta chains. Directly associated with ODBB in the E1 complex. Thiamine diphosphate is required as a cofactor.

It carries out the reaction N(6)-[(R)-lipoyl]-L-lysyl-[protein] + 3-methyl-2-oxobutanoate + H(+) = N(6)-[(R)-S(8)-2-methylpropanoyldihydrolipoyl]-L-lysyl-[protein] + CO2. Its function is as follows. The branched-chain alpha-keto dehydrogenase complex catalyzes the overall conversion of alpha-keto acids to acyl-CoA and CO(2). It contains multiple copies of three enzymatic components: branched-chain alpha-keto acid decarboxylase (E1), lipoamide acyltransferase (E2) and lipoamide dehydrogenase (E3). The chain is 2-oxoisovalerate dehydrogenase subunit alpha from Thermus thermophilus (strain ATCC 27634 / DSM 579 / HB8).